The sequence spans 302 residues: Sulfate adenylyltransferase subunit 2 (302 aa).

Belongs to the PAPS reductase family. CysD subfamily. Heterodimer composed of CysD, the smaller subunit, and CysN.

It carries out the reaction sulfate + ATP + H(+) = adenosine 5'-phosphosulfate + diphosphate. It functions in the pathway sulfur metabolism; hydrogen sulfide biosynthesis; sulfite from sulfate: step 1/3. With CysN forms the ATP sulfurylase (ATPS) that catalyzes the adenylation of sulfate producing adenosine 5'-phosphosulfate (APS) and diphosphate, the first enzymatic step in sulfur assimilation pathway. APS synthesis involves the formation of a high-energy phosphoric-sulfuric acid anhydride bond driven by GTP hydrolysis by CysN coupled to ATP hydrolysis by CysD. This chain is Sulfate adenylyltransferase subunit 2, found in Yersinia pestis bv. Antiqua (strain Nepal516).